Reading from the N-terminus, the 218-residue chain is Thiamine-phosphate synthase (218 aa).

Residues 36–40 and Asp-70 each bind 4-amino-2-methyl-5-(diphosphooxymethyl)pyrimidine; that span reads QVRSK. Asp-71 and Asp-94 together coordinate Mg(2+). Thr-113 is a binding site for 4-amino-2-methyl-5-(diphosphooxymethyl)pyrimidine. A 2-[(2R,5Z)-2-carboxy-4-methylthiazol-5(2H)-ylidene]ethyl phosphate-binding site is contributed by 141 to 143; it reads TPT. Position 144 (Lys-144) interacts with 4-amino-2-methyl-5-(diphosphooxymethyl)pyrimidine.

It belongs to the thiamine-phosphate synthase family. The cofactor is Mg(2+).

The enzyme catalyses 2-[(2R,5Z)-2-carboxy-4-methylthiazol-5(2H)-ylidene]ethyl phosphate + 4-amino-2-methyl-5-(diphosphooxymethyl)pyrimidine + 2 H(+) = thiamine phosphate + CO2 + diphosphate. The catalysed reaction is 2-(2-carboxy-4-methylthiazol-5-yl)ethyl phosphate + 4-amino-2-methyl-5-(diphosphooxymethyl)pyrimidine + 2 H(+) = thiamine phosphate + CO2 + diphosphate. It catalyses the reaction 4-methyl-5-(2-phosphooxyethyl)-thiazole + 4-amino-2-methyl-5-(diphosphooxymethyl)pyrimidine + H(+) = thiamine phosphate + diphosphate. Its pathway is cofactor biosynthesis; thiamine diphosphate biosynthesis; thiamine phosphate from 4-amino-2-methyl-5-diphosphomethylpyrimidine and 4-methyl-5-(2-phosphoethyl)-thiazole: step 1/1. In terms of biological role, condenses 4-methyl-5-(beta-hydroxyethyl)thiazole monophosphate (THZ-P) and 2-methyl-4-amino-5-hydroxymethyl pyrimidine pyrophosphate (HMP-PP) to form thiamine monophosphate (TMP). In Corynebacterium jeikeium (strain K411), this protein is Thiamine-phosphate synthase.